A 357-amino-acid polypeptide reads, in one-letter code: Alanine racemase (357 aa).

Lys33 functions as the Proton acceptor; specific for D-alanine in the catalytic mechanism. Lys33 is subject to N6-(pyridoxal phosphate)lysine. Substrate is bound at residue Arg129. Residue Tyr253 is the Proton acceptor; specific for L-alanine of the active site. Met301 serves as a coordination point for substrate.

The protein belongs to the alanine racemase family. Pyridoxal 5'-phosphate serves as cofactor.

The enzyme catalyses L-alanine = D-alanine. It participates in amino-acid biosynthesis; D-alanine biosynthesis; D-alanine from L-alanine: step 1/1. Catalyzes the interconversion of L-alanine and D-alanine. May also act on other amino acids. The protein is Alanine racemase (alr) of Pseudomonas savastanoi pv. phaseolicola (strain 1448A / Race 6) (Pseudomonas syringae pv. phaseolicola (strain 1448A / Race 6)).